The primary structure comprises 777 residues: Semaphorin-4F (777 aa).

The first 40 residues, 1 to 40, serve as a signal peptide directing secretion; it reads MLARAERPRPGPRPPPVSLFPPPSSLLLLLLAMLSAPVCG. The Extracellular portion of the chain corresponds to 41-667; sequence RVPRSVPRTS…PANRAHTVVG (627 aa). In terms of domain architecture, Sema spans 48–516; that stretch reads RTSLPISEAD…SHTEVTQVNT (469 aa). Asn-70 carries an N-linked (GlcNAc...) asparagine glycan. Cys-118 and Cys-128 form a disulfide bridge. Asn-139 is a glycosylation site (N-linked (GlcNAc...) asparagine). 3 disulfides stabilise this stretch: Cys-146–Cys-155, Cys-279–Cys-390, and Cys-303–Cys-349. A glycan (N-linked (GlcNAc...) asparagine) is linked at Asn-515. Residues 518-569 form the PSI domain; sequence NCGRLQSCSECILAQDPVCAWSFRLDACVAHAGEHRGMVQDIESADVSSLCP. Cystine bridges form between Cys-519-Cys-536, Cys-528-Cys-545, and Cys-593-Cys-634. Positions 586 to 641 constitute an Ig-like C2-type domain; sequence VGHVVLPCSPSSAWASCVWHQPSGVTSLTPRRDGLEVVVTPGAMGAYACECQEGGA. The helical transmembrane segment at 668 to 688 threads the bilayer; it reads AGLVGFFLGVLAASLTLLLIG. At 689–777 the chain is on the cytoplasmic side; sequence RRQQRRRQRE…PLATCDETSI (89 aa). The disordered stretch occupies residues 703 to 742; sequence DKVGLDLGAPPSGTTSYSQDPPSPSPEDERLPLALGKRGS. A phosphoserine mark is found at Ser-725 and Ser-727. The short motif at 775-777 is the PDZ-binding element; sequence TSI.

Belongs to the semaphorin family. Interacts (via PDZ-binding motif) with DLG4/SAP90 (via PDZ domain 2); this interaction may promote translocation of DLG4/SAP90 to the membrane. Expressed throughout the adult brain, where it shows particularly strong expression in the hippocampus, corpus callosum, granular layer and deep nuclei of the cerebellum, and the mitral layer of the olfactory bulb (at protein level). At the cellular level, detected in neuronal precursors, postmitotic neurons, pyramidal neurons, and glial cells including mature oligodendocytes and oligodendroglial precursor cells (at protein level).

The protein resides in the cell membrane. It is found in the postsynaptic density. It localises to the perikaryon. The protein localises to the cell projection. Its subcellular location is the dendrite. Probable cell surface receptor that regulates oligodendroglial precursor cell migration. Might also regulate differentiation of oligodendroglial precursor cells. Has growth cone collapse activity against retinal ganglion-cell axons. This chain is Semaphorin-4F (Sema4f), found in Mus musculus (Mouse).